A 78-amino-acid chain; its full sequence is U7-lycotoxin-Ls1a (78 aa).

The N-terminal stretch at 1 to 22 (MKLIIFTGLALLLIVSLIDVEA) is a signal peptide. Residues 23-26 (QNEG) constitute a propeptide that is removed on maturation.

This sequence belongs to the neurotoxin 19 (CSTX) family. 07 (U7-Lctx) subfamily. Post-translationally, contains 4 disulfide bonds. As to expression, expressed by the venom gland.

It is found in the secreted. This is U7-lycotoxin-Ls1a from Lycosa singoriensis (Wolf spider).